The sequence spans 1375 residues: DNA-directed RNA polymerase subunit beta (1375 aa).

This sequence belongs to the RNA polymerase beta chain family. In terms of assembly, the RNAP catalytic core consists of 2 alpha, 1 beta, 1 beta' and 1 omega subunit. When a sigma factor is associated with the core the holoenzyme is formed, which can initiate transcription.

It carries out the reaction RNA(n) + a ribonucleoside 5'-triphosphate = RNA(n+1) + diphosphate. Its function is as follows. DNA-dependent RNA polymerase catalyzes the transcription of DNA into RNA using the four ribonucleoside triphosphates as substrates. The chain is DNA-directed RNA polymerase subunit beta from Campylobacter jejuni subsp. jejuni serotype O:6 (strain 81116 / NCTC 11828).